The chain runs to 464 residues: Fumarate hydratase class II (464 aa).

Substrate contacts are provided by residues 98-100 (SGT), 129-132 (HPND), 139-141 (SSN), and Thr-187. Residue His-188 is the Proton donor/acceptor of the active site. Ser-318 is a catalytic residue. Residues Ser-319 and 324–326 (KVN) contribute to the substrate site.

The protein belongs to the class-II fumarase/aspartase family. Fumarase subfamily. As to quaternary structure, homotetramer.

Its subcellular location is the cytoplasm. It catalyses the reaction (S)-malate = fumarate + H2O. Its pathway is carbohydrate metabolism; tricarboxylic acid cycle; (S)-malate from fumarate: step 1/1. Involved in the TCA cycle. Catalyzes the stereospecific interconversion of fumarate to L-malate. In Pasteurella multocida (strain Pm70), this protein is Fumarate hydratase class II.